Reading from the N-terminus, the 37-residue chain is Large ribosomal subunit protein bL36c (37 aa).

The protein belongs to the bacterial ribosomal protein bL36 family.

Its subcellular location is the plastid. The protein localises to the organellar chromatophore. This is Large ribosomal subunit protein bL36c from Paulinella chromatophora.